The primary structure comprises 453 residues: Tryptophan biosynthesis protein TrpCF (453 aa).

Residues 1–257 (MMQTVLAKIV…AAVRRVLLGE (257 aa)) form an indole-3-glycerol phosphate synthase region. The segment at 258 to 453 (NKVCGLTRGQ…ASVFQTLRAY (196 aa)) is N-(5'-phosphoribosyl)anthranilate isomerase.

The protein in the N-terminal section; belongs to the TrpC family. In the C-terminal section; belongs to the TrpF family. Monomer.

It carries out the reaction N-(5-phospho-beta-D-ribosyl)anthranilate = 1-(2-carboxyphenylamino)-1-deoxy-D-ribulose 5-phosphate. The enzyme catalyses 1-(2-carboxyphenylamino)-1-deoxy-D-ribulose 5-phosphate + H(+) = (1S,2R)-1-C-(indol-3-yl)glycerol 3-phosphate + CO2 + H2O. It functions in the pathway amino-acid biosynthesis; L-tryptophan biosynthesis; L-tryptophan from chorismate: step 3/5. The protein operates within amino-acid biosynthesis; L-tryptophan biosynthesis; L-tryptophan from chorismate: step 4/5. In terms of biological role, bifunctional enzyme that catalyzes two sequential steps of tryptophan biosynthetic pathway. The first reaction is catalyzed by the isomerase, coded by the TrpF domain; the second reaction is catalyzed by the synthase, coded by the TrpC domain. The protein is Tryptophan biosynthesis protein TrpCF (trpC) of Escherichia coli (strain K12).